The following is a 116-amino-acid chain: Prefoldin subunit beta (116 aa).

The protein belongs to the prefoldin subunit beta family. Heterohexamer of two alpha and four beta subunits.

The protein localises to the cytoplasm. Molecular chaperone capable of stabilizing a range of proteins. Seems to fulfill an ATP-independent, HSP70-like function in archaeal de novo protein folding. The protein is Prefoldin subunit beta (pfdB) of Archaeoglobus fulgidus (strain ATCC 49558 / DSM 4304 / JCM 9628 / NBRC 100126 / VC-16).